A 221-amino-acid polypeptide reads, in one-letter code: UPF0758 protein YicR (221 aa).

An MPN domain is found at Ala99–Ile221. Zn(2+) contacts are provided by His170, His172, and Asp183. Residues His170–Asp183 carry the JAMM motif motif.

This sequence belongs to the UPF0758 family. YicR subfamily.

The chain is UPF0758 protein YicR from Salmonella agona (strain SL483).